A 275-amino-acid chain; its full sequence is MQAVQQEIAQALKVQPPFEGAAALEQEVARRVAFIKGCLNNARLKTLVLGISGGVDSLTAALLAQRAINELRSETGDAGYRFIAVRLPYQVQHDEHDAQACLEVIKADEVHTVDIAPAVRALAAETEALKGGSPSLVDFVVGNIKARTRMVAQYTIAGARAGLVIGTDHAAEAVMGFFTKFGDGACDLAPLSGLVKNQVRAIARSFGAPESLVEKVPTADLEDLEPGKPDEASHGVTYQQIDAFLHGQPVSQEAFDIIVATYRKTQHKRELPFAP.

Residue 50-57 (GISGGVDS) coordinates ATP. D56 contacts Mg(2+). R147 is a deamido-NAD(+) binding site. T167 contacts ATP. Mg(2+) is bound at residue E172. Deamido-NAD(+) is bound by residues K180 and D187. ATP-binding residues include K196 and T218. 267–268 (HK) is a deamido-NAD(+) binding site.

This sequence belongs to the NAD synthetase family. In terms of assembly, homodimer.

It catalyses the reaction deamido-NAD(+) + NH4(+) + ATP = AMP + diphosphate + NAD(+) + H(+). Its pathway is cofactor biosynthesis; NAD(+) biosynthesis; NAD(+) from deamido-NAD(+) (ammonia route): step 1/1. Catalyzes the ATP-dependent amidation of deamido-NAD to form NAD. Uses ammonia as a nitrogen source. The chain is NH(3)-dependent NAD(+) synthetase from Pseudomonas entomophila (strain L48).